We begin with the raw amino-acid sequence, 150 residues long: D-aminoacyl-tRNA deacylase (150 aa).

The Gly-cisPro motif, important for rejection of L-amino acids signature appears at 138–139 (GP).

The protein belongs to the DTD family. Homodimer.

The protein resides in the cytoplasm. The catalysed reaction is glycyl-tRNA(Ala) + H2O = tRNA(Ala) + glycine + H(+). It carries out the reaction a D-aminoacyl-tRNA + H2O = a tRNA + a D-alpha-amino acid + H(+). Its function is as follows. An aminoacyl-tRNA editing enzyme that deacylates mischarged D-aminoacyl-tRNAs. Also deacylates mischarged glycyl-tRNA(Ala), protecting cells against glycine mischarging by AlaRS. Acts via tRNA-based rather than protein-based catalysis; rejects L-amino acids rather than detecting D-amino acids in the active site. By recycling D-aminoacyl-tRNA to D-amino acids and free tRNA molecules, this enzyme counteracts the toxicity associated with the formation of D-aminoacyl-tRNA entities in vivo and helps enforce protein L-homochirality. In Chlorobium phaeobacteroides (strain DSM 266 / SMG 266 / 2430), this protein is D-aminoacyl-tRNA deacylase.